Here is a 154-residue protein sequence, read N- to C-terminus: Endoribonuclease YbeY (154 aa).

Zn(2+) is bound by residues histidine 114, histidine 118, and histidine 124.

Belongs to the endoribonuclease YbeY family. Requires Zn(2+) as cofactor.

Its subcellular location is the cytoplasm. In terms of biological role, single strand-specific metallo-endoribonuclease involved in late-stage 70S ribosome quality control and in maturation of the 3' terminus of the 16S rRNA. The protein is Endoribonuclease YbeY of Histophilus somni (strain 2336) (Haemophilus somnus).